The sequence spans 428 residues: Cell division protein FtsZ (428 aa).

Residues 73 to 77 (GGGGN), 160 to 162 (GTG), E191, R195, and D239 contribute to the GTP site. A disordered region spans residues 378–428 (NAANARVVSAPPKRTPTQTPLTNSPAPTPEPKEKSGLDIPDFLQRRRPPKN). Polar residues predominate over residues 392–402 (TPTQTPLTNSP).

Belongs to the FtsZ family. In terms of assembly, homodimer. Polymerizes to form a dynamic ring structure in a strictly GTP-dependent manner. Interacts directly with several other division proteins.

The protein resides in the cytoplasm. Functionally, essential cell division protein that forms a contractile ring structure (Z ring) at the future cell division site. The regulation of the ring assembly controls the timing and the location of cell division. One of the functions of the FtsZ ring is to recruit other cell division proteins to the septum to produce a new cell wall between the dividing cells. Binds GTP and shows GTPase activity. This is Cell division protein FtsZ from Nostoc sp. (strain PCC 7120 / SAG 25.82 / UTEX 2576).